A 371-amino-acid polypeptide reads, in one-letter code: MEKQKLDLSAYQIRTDLAVETKEILEQENDPNVITKDGIQGIVEKEKEEHGIRIRTVEITKEGEALTSKKAGTYLTLEAQGIREKDSEMQEKVVEVFAHHFAQFLKDRGIQTDASCLVVGLGNWNVTPDALGPLTVESLLVTRHLFELQPENVQEGYRPVSSLSPGVMGLTGIETSDIIQGVIERSKPDFVIAIDALAARAVERVNTTIQISDTGIHPGSGVGNKRKELSKETLGIPVIAIGVPTVVDAVTIASDTIDYVLKHFGRELKDDRPSRSLVPAGLTFGKKKVLNEEDLPDEETRQSFLGIVGTLPEEEKRQLIHEVLAPLGQNLMVTPKEVDTFIDDMANVLANGLNTALHQKISQDNMGSYNH.

The propeptide occupies 1–16 (MEKQKLDLSAYQIRTD).

This sequence belongs to the peptidase A25 family. Homotetramer. Autoproteolytically processed. The inactive tetrameric zymogen termed p46 autoprocesses to a smaller form termed p41, which is active only during spore germination.

The enzyme catalyses Endopeptidase action with P4 Glu or Asp, P1 preferably Glu &gt; Asp, P1' hydrophobic and P2' Ala.. Functionally, initiates the rapid degradation of small, acid-soluble proteins during spore germination. In Bacillus pumilus (strain SAFR-032), this protein is Germination protease.